Reading from the N-terminus, the 193-residue chain is Phosphoheptose isomerase (193 aa).

Residues 37–193 enclose the SIS domain; that stretch reads LAASFKADGK…QLIEKEMASV (157 aa). Residue 52-54 coordinates substrate; that stretch reads NGG. H61 and E65 together coordinate Zn(2+). Substrate contacts are provided by residues E65, 93–94, 119–121, S124, and Q172; these read ND and STS. 2 residues coordinate Zn(2+): Q172 and H180.

Belongs to the SIS family. GmhA subfamily. As to quaternary structure, homotetramer. Zn(2+) is required as a cofactor.

Its subcellular location is the cytoplasm. The catalysed reaction is 2 D-sedoheptulose 7-phosphate = D-glycero-alpha-D-manno-heptose 7-phosphate + D-glycero-beta-D-manno-heptose 7-phosphate. Its pathway is carbohydrate biosynthesis; D-glycero-D-manno-heptose 7-phosphate biosynthesis; D-glycero-alpha-D-manno-heptose 7-phosphate and D-glycero-beta-D-manno-heptose 7-phosphate from sedoheptulose 7-phosphate: step 1/1. Catalyzes the isomerization of sedoheptulose 7-phosphate in D-glycero-D-manno-heptose 7-phosphate. The protein is Phosphoheptose isomerase of Edwardsiella ictaluri (strain 93-146).